Here is a 266-residue protein sequence, read N- to C-terminus: uncharacterized protein (266 aa).

The next 8 helical transmembrane spans lie at 9–29 (IAAL…LFIF), 37–57 (TMPH…LVFY), 69–89 (LIKV…ISLL), 123–143 (FLLM…MIFT), 153–173 (YNPF…LVIA), 184–204 (LPLA…LFLL), 216–236 (SVFA…ILIL), and 246–266 (TNSL…MVFV).

It localises to the cell membrane. This is an uncharacterized protein from Haemophilus influenzae (strain ATCC 51907 / DSM 11121 / KW20 / Rd).